A 1662-amino-acid polypeptide reads, in one-letter code: Putative mediator of RNA polymerase II transcription subunit 23 (1662 aa).

4 disordered regions span residues 1 to 24 (MYTN…PQQQ), 95 to 139 (QQRP…QSQP), 206 to 252 (TTTP…STTN), and 1530 to 1572 (GYDD…QDTN). Positions 39 to 122 (QQQNIQQQQQ…QQSQQQQASL (84 aa)) form a coiled coil. Residues 95–124 (QQRPQTPQQNAQQQSQQSQQSQQQQASLGQ) are compositionally biased toward low complexity. Residues 1532–1560 (DDDDDDEDDDYYDEDDEDEDDDNEDDQQD) are compositionally biased toward acidic residues.

Belongs to the Mediator complex subunit 23 family. As to quaternary structure, component of the Mediator complex.

The protein localises to the nucleus. Component of the Mediator complex, a coactivator involved in the regulated transcription of nearly all RNA polymerase II-dependent genes. Mediator functions as a bridge to convey information from gene-specific regulatory proteins to the basal RNA polymerase II transcription machinery. Mediator is recruited to promoters by direct interactions with regulatory proteins and serves as a scaffold for the assembly of a functional preinitiation complex with RNA polymerase II and the general transcription factors. The polypeptide is Putative mediator of RNA polymerase II transcription subunit 23 (med23) (Dictyostelium discoideum (Social amoeba)).